The following is a 238-amino-acid chain: Ribonuclease PH (238 aa).

Residues Arg86 and 124 to 126 (GTR) each bind phosphate.

It belongs to the RNase PH family. As to quaternary structure, homohexameric ring arranged as a trimer of dimers.

It carries out the reaction tRNA(n+1) + phosphate = tRNA(n) + a ribonucleoside 5'-diphosphate. In terms of biological role, phosphorolytic 3'-5' exoribonuclease that plays an important role in tRNA 3'-end maturation. Removes nucleotide residues following the 3'-CCA terminus of tRNAs; can also add nucleotides to the ends of RNA molecules by using nucleoside diphosphates as substrates, but this may not be physiologically important. Probably plays a role in initiation of 16S rRNA degradation (leading to ribosome degradation) during starvation. This is Ribonuclease PH from Phenylobacterium zucineum (strain HLK1).